We begin with the raw amino-acid sequence, 84 residues long: Small ribosomal subunit protein uS17 (84 aa).

It belongs to the universal ribosomal protein uS17 family. Part of the 30S ribosomal subunit.

Functionally, one of the primary rRNA binding proteins, it binds specifically to the 5'-end of 16S ribosomal RNA. The sequence is that of Small ribosomal subunit protein uS17 from Aliivibrio fischeri (strain ATCC 700601 / ES114) (Vibrio fischeri).